A 334-amino-acid chain; its full sequence is uncharacterized protein (334 aa).

The protein belongs to the ADP-ribosylglycohydrolase family.

This is an uncharacterized protein from Escherichia coli (strain K12).